Reading from the N-terminus, the 202-residue chain is LexA repressor (202 aa).

The segment at residues 28 to 48 (RAEIAQRLGFRSPNAAEEHLK) is a DNA-binding region (H-T-H motif). Residues Ser119 and Lys156 each act as for autocatalytic cleavage activity in the active site.

This sequence belongs to the peptidase S24 family. In terms of assembly, homodimer.

The enzyme catalyses Hydrolysis of Ala-|-Gly bond in repressor LexA.. In terms of biological role, represses a number of genes involved in the response to DNA damage (SOS response), including recA and lexA. Binds to the 16 bp palindromic sequence 5'-CTGTATATATATACAG-3'. In the presence of single-stranded DNA, RecA interacts with LexA causing an autocatalytic cleavage which disrupts the DNA-binding part of LexA, leading to derepression of the SOS regulon and eventually DNA repair. The chain is LexA repressor from Yersinia pseudotuberculosis serotype O:1b (strain IP 31758).